The primary structure comprises 334 residues: Chemotactic signal transduction system substrate-binding protein CosB (334 aa).

The first 29 residues, 1–29 (MMDTPEHASTSSRRQLLGMLAAGGTTAVA), serve as a signal peptide directing secretion.

This sequence belongs to the OsmX family.

The protein resides in the cell membrane. Functionally, mediates chemotaxis towards compatible osmolytes. May function as a receptor that binds the osmolytes and transduces a signal to CosT. Has probably no additional role in transport. This chain is Chemotactic signal transduction system substrate-binding protein CosB (cosB), found in Halobacterium salinarum (strain ATCC 29341 / DSM 671 / R1).